A 246-amino-acid polypeptide reads, in one-letter code: MQLKTSIGLITCRMNTQSNQIETILVQKRYSLAFSEFIHCHYSINSNHSHLIKMFNNMTINERLLIKTLDFDRMWYHIWIETPVYELYHKKYQKFKKNWLIPDNGKKLISLINQAKGSGTLLWEIPKGKPKENESDLACAIREFEEETGIAREDYQILPAFKKSMSYFEGKTEYKHIYFLAVLCKSLEEPNMNLSLQYETRIAEISKISWQNMEAVRFISKHQSLNLEPIIGPAFNFIKNYLRYKH.

A Nudix hydrolase domain is found at Lys91 to Lys239. A Nudix box motif is present at residues Gly128–Gly149. Residue Glu134 participates in Mg(2+) binding. Glu143 functions as the Nucleophile in the catalytic mechanism. Mg(2+) contacts are provided by Glu147 and Glu169.

It belongs to the Nudix hydrolase family. DIPP subfamily. In terms of assembly, interacts with host RPL23A. The cofactor is Mg(2+). It depends on Mn(2+) as a cofactor.

It is found in the host rough endoplasmic reticulum. The catalysed reaction is diphospho-myo-inositol polyphosphate + H2O = myo-inositol polyphosphate + phosphate.. In terms of biological role, decapping enzyme required for the removal of the 5'-end m7GpppN cap tethered to viral and host mRNAs to allow their decay in cells. May therefore accelerate viral and cellular mRNA turnover to eliminate competing host mRNAs and allow stage-specific synthesis of viral proteins. Acceleration of the turnover of cellular transcripts may even promote the shutoff of host protein synthesis. In addition to the mRNA cap, g5R also efficiently hydrolyzes diphosphoinositol polyphosphates. Down-regulation of the level of PP-InsP5 (diphosphoinositol pentakisphosphate) may play a role in viral manipulation of the cellular secretory pathway, a step necessary for the formation of virions. Binds viral and cellular poly(A) mRNAs, thereby decreasing both types of mRNAs. The sequence is that of mRNA-decapping protein g5R from African swine fever virus (isolate Pig/Kenya/KEN-50/1950) (ASFV).